Reading from the N-terminus, the 371-residue chain is tRNA-specific 2-thiouridylase MnmA (371 aa).

Residues 13–20 and Met-39 contribute to the ATP site; that span reads GMSGGVDS. Residues 99 to 101 are interaction with target base in tRNA; it reads NPD. The active-site Nucleophile is the Cys-104. Cys-104 and Cys-200 are oxidised to a cystine. ATP is bound at residue Gly-128. The interaction with tRNA stretch occupies residues 150–152; sequence KDQ. Cys-200 acts as the Cysteine persulfide intermediate in catalysis. Positions 308–309 are interaction with tRNA; it reads RY.

Belongs to the MnmA/TRMU family.

It is found in the cytoplasm. It catalyses the reaction S-sulfanyl-L-cysteinyl-[protein] + uridine(34) in tRNA + AH2 + ATP = 2-thiouridine(34) in tRNA + L-cysteinyl-[protein] + A + AMP + diphosphate + H(+). In terms of biological role, catalyzes the 2-thiolation of uridine at the wobble position (U34) of tRNA, leading to the formation of s(2)U34. The polypeptide is tRNA-specific 2-thiouridylase MnmA (Listeria monocytogenes serotype 4b (strain CLIP80459)).